The following is a 362-amino-acid chain: MTAEGSGSSTAAVASHDPSHTRPSRREAPDRNLAMELVRVTEAGAMAAGRWVGRGDKEGGDGAAVDAMRELVNSVSMRGVVVIGEGEKDHAPMLYNGEEVGNGDGPECDFAVDPIDGTTLMSKGMTNAISVLAVADRGTMFDPSAVFYMNKIAVGPDAAHVLDITAPISENIRAVAKVKDLSVRDMTVCILDRPRHAQLIHDVRATGARIRLITDGDVAGAISACRPHSGTDLLAGIGGTPEGIIAAAAIRCMGGAIQAQLAPRDDAERRKALEAGYDLNQVLTTEDLVSGENVFFCATGVTDGDLLKGVRYYPGGCTTHSIVMRSKSGTVRMIEAYHRLSKLNEYSAIDFTGDSSAVYPLP.

Positions 1-12 (MTAEGSGSSTAA) are enriched in polar residues. Residues 1-32 (MTAEGSGSSTAAVASHDPSHTRPSRREAPDRN) form a disordered region. Basic and acidic residues predominate over residues 17–30 (DPSHTRPSRREAPD). Mn(2+)-binding residues include D61, E85, D113, and D116. Substrate is bound by residues 116–118 (DGT), Y148, 193–195 (RPR), 215–217 (DGD), and G239. E242 provides a ligand contact to Mn(2+).

Belongs to the FBPase class 2 family. Requires Mn(2+) as cofactor.

The protein resides in the cytoplasm. It catalyses the reaction beta-D-fructose 1,6-bisphosphate + H2O = beta-D-fructose 6-phosphate + phosphate. Its pathway is carbohydrate biosynthesis; gluconeogenesis. In terms of biological role, catalyzes the hydrolysis of fructose 1,6-bisphosphate to fructose 6-phosphate. The polypeptide is Fructose-1,6-bisphosphatase class 2 (glpX) (Mycobacterium bovis (strain BCG / Tokyo 172 / ATCC 35737 / TMC 1019)).